The chain runs to 210 residues: Large ribosomal subunit protein uL4 (210 aa).

Part of the 50S ribosomal subunit. Post-translationally, the N-terminus is blocked.

One of the primary rRNA binding proteins, this protein initially binds near the 5'-end of the 23S rRNA. It is important during the early stages of 50S assembly. It makes multiple contacts with different domains of the 23S rRNA in the assembled 50S subunit and ribosome. Functionally, forms part of the polypeptide exit tunnel. Its function is as follows. This protein can be incorporated into E.coli ribosomes in vivo, which resulted in decreased peptidyltransferase (Ptase) activity of the hybrid ribosomes. The hybrid 50S subunits associate less well with 30S subunits to form the ribosome. The sequence is that of Large ribosomal subunit protein uL4 (rplD) from Thermus thermophilus (strain ATCC 27634 / DSM 579 / HB8).